The sequence spans 162 residues: Peptidyl-prolyl cis-trans isomerase (162 aa).

N-acetylserine is present on serine 2. One can recognise a PPIase cyclophilin-type domain in the interval tyrosine 5–glutamate 161. Glycyl lysine isopeptide (Lys-Gly) (interchain with G-Cter in ubiquitin) cross-links involve residues lysine 29 and lysine 42. Position 71 is a phosphothreonine (threonine 71). Residues lysine 123 and lysine 139 each participate in a glycyl lysine isopeptide (Lys-Gly) (interchain with G-Cter in ubiquitin) cross-link. Residues serine 142 and serine 145 each carry the phosphoserine modification. Glycyl lysine isopeptide (Lys-Gly) (interchain with G-Cter in ubiquitin) cross-links involve residues lysine 151 and lysine 158.

It belongs to the cyclophilin-type PPIase family. PPIase A subfamily. In terms of assembly, interacts with a complex composed of SIN3 and RPD3. Identified in the Set3C complex with HOS2, HST1, SNT1, SIF2, HOS4/YIL112W and SET3.

The protein localises to the cytoplasm. Its subcellular location is the nucleus. It is found in the mitochondrion intermembrane space. The catalysed reaction is [protein]-peptidylproline (omega=180) = [protein]-peptidylproline (omega=0). Its activity is regulated as follows. Binds cyclosporin A (CsA). CsA mediates some of its effects via an inhibitory action on PPIase. Its function is as follows. PPIases accelerate the folding of proteins. It catalyzes the cis-trans isomerization of proline imidic peptide bonds in oligopeptides. Involved in histone deacetylase complexes, suggesting a function in chromatin. Imports fructose-1,6-bisphosphatase (FBPase) into the intermediate vacuole import and degradation (Vid) vesicles. Regulates the meiotic gene program via the Set3C histone deacetylase complex to promote efficient sporulation, and the prolyl-isomerase activity is required for this function. The protein is Peptidyl-prolyl cis-trans isomerase (CPR1) of Saccharomyces cerevisiae (strain ATCC 204508 / S288c) (Baker's yeast).